Here is a 671-residue protein sequence, read N- to C-terminus: DNA ligase (671 aa).

NAD(+)-binding positions include 32-36, 81-82, and Glu113; these read DAEYD and SL. The active-site N6-AMP-lysine intermediate is the Lys115. Arg136, Glu173, Lys290, and Lys314 together coordinate NAD(+). The Zn(2+) site is built by Cys408, Cys411, Cys426, and Cys432. The 79-residue stretch at 593–671 folds into the BRCT domain; that stretch reads EIDSPFAGKT…EAEMLRLLGS (79 aa).

This sequence belongs to the NAD-dependent DNA ligase family. LigA subfamily. Mg(2+) serves as cofactor. It depends on Mn(2+) as a cofactor.

The catalysed reaction is NAD(+) + (deoxyribonucleotide)n-3'-hydroxyl + 5'-phospho-(deoxyribonucleotide)m = (deoxyribonucleotide)n+m + AMP + beta-nicotinamide D-nucleotide.. DNA ligase that catalyzes the formation of phosphodiester linkages between 5'-phosphoryl and 3'-hydroxyl groups in double-stranded DNA using NAD as a coenzyme and as the energy source for the reaction. It is essential for DNA replication and repair of damaged DNA. This Escherichia coli (strain ATCC 8739 / DSM 1576 / NBRC 3972 / NCIMB 8545 / WDCM 00012 / Crooks) protein is DNA ligase.